Here is a 318-residue protein sequence, read N- to C-terminus: Transaldolase (318 aa).

K132 functions as the Schiff-base intermediate with substrate in the catalytic mechanism.

It belongs to the transaldolase family. Type 1 subfamily. In terms of assembly, homodimer.

It is found in the cytoplasm. It catalyses the reaction D-sedoheptulose 7-phosphate + D-glyceraldehyde 3-phosphate = D-erythrose 4-phosphate + beta-D-fructose 6-phosphate. Its pathway is carbohydrate degradation; pentose phosphate pathway; D-glyceraldehyde 3-phosphate and beta-D-fructose 6-phosphate from D-ribose 5-phosphate and D-xylulose 5-phosphate (non-oxidative stage): step 2/3. Transaldolase is important for the balance of metabolites in the pentose-phosphate pathway. This is Transaldolase from Shewanella woodyi (strain ATCC 51908 / MS32).